A 211-amino-acid polypeptide reads, in one-letter code: uncharacterized protein (211 aa).

The segment at 1–43 is disordered; that stretch reads MRPEVGREPAALQPRQRPRSDHQLHRSPFTVPPRTPACRSPGP.

This is an uncharacterized protein from Homo sapiens (Human).